The chain runs to 350 residues: Uroporphyrinogen decarboxylase (350 aa).

Substrate-binding positions include 28–32, F47, D78, Y155, S210, and H325; that span reads RQAGR.

Belongs to the uroporphyrinogen decarboxylase family. As to quaternary structure, homodimer.

The protein localises to the cytoplasm. The enzyme catalyses uroporphyrinogen III + 4 H(+) = coproporphyrinogen III + 4 CO2. Its pathway is porphyrin-containing compound metabolism; protoporphyrin-IX biosynthesis; coproporphyrinogen-III from 5-aminolevulinate: step 4/4. Catalyzes the decarboxylation of four acetate groups of uroporphyrinogen-III to yield coproporphyrinogen-III. This chain is Uroporphyrinogen decarboxylase, found in Synechocystis sp. (strain ATCC 27184 / PCC 6803 / Kazusa).